The following is a 429-amino-acid chain: Enolase (429 aa).

Gln-163 serves as a coordination point for (2R)-2-phosphoglycerate. Glu-205 serves as the catalytic Proton donor. Mg(2+) contacts are provided by Asp-242, Glu-286, and Asp-313. (2R)-2-phosphoglycerate is bound by residues Lys-338, Arg-367, Ser-368, and Lys-389. Residue Lys-338 is the Proton acceptor of the active site.

The protein belongs to the enolase family. Requires Mg(2+) as cofactor.

The protein resides in the cytoplasm. It localises to the secreted. Its subcellular location is the cell surface. The enzyme catalyses (2R)-2-phosphoglycerate = phosphoenolpyruvate + H2O. It functions in the pathway carbohydrate degradation; glycolysis; pyruvate from D-glyceraldehyde 3-phosphate: step 4/5. In terms of biological role, catalyzes the reversible conversion of 2-phosphoglycerate (2-PG) into phosphoenolpyruvate (PEP). It is essential for the degradation of carbohydrates via glycolysis. In Thermoanaerobacter sp. (strain X514), this protein is Enolase.